A 244-amino-acid chain; its full sequence is Uridylate kinase (244 aa).

17 to 20 (KVSG) is a binding site for ATP. Residues 25–30 (GDKGFG) form an involved in allosteric activation by GTP region. UMP is bound at residue G59. The ATP site is built by G60 and R64. UMP is bound by residues D80 and 141-148 (VGNPFFTT). Residues T168, Q169, Y174, and D177 each coordinate ATP.

The protein belongs to the UMP kinase family. As to quaternary structure, homohexamer.

It localises to the cytoplasm. The enzyme catalyses UMP + ATP = UDP + ADP. It functions in the pathway pyrimidine metabolism; CTP biosynthesis via de novo pathway; UDP from UMP (UMPK route): step 1/1. Allosterically activated by GTP. Inhibited by UTP. Functionally, catalyzes the reversible phosphorylation of UMP to UDP. This is Uridylate kinase from Ehrlichia ruminantium (strain Welgevonden).